A 488-amino-acid polypeptide reads, in one-letter code: Glutamyl-tRNA(Gln) amidotransferase subunit A (488 aa).

Catalysis depends on charge relay system residues K77 and S152. The active-site Acyl-ester intermediate is S176.

Belongs to the amidase family. GatA subfamily. As to quaternary structure, heterotrimer of A, B and C subunits.

The enzyme catalyses L-glutamyl-tRNA(Gln) + L-glutamine + ATP + H2O = L-glutaminyl-tRNA(Gln) + L-glutamate + ADP + phosphate + H(+). In terms of biological role, allows the formation of correctly charged Gln-tRNA(Gln) through the transamidation of misacylated Glu-tRNA(Gln) in organisms which lack glutaminyl-tRNA synthetase. The reaction takes place in the presence of glutamine and ATP through an activated gamma-phospho-Glu-tRNA(Gln). In Streptococcus pyogenes serotype M28 (strain MGAS6180), this protein is Glutamyl-tRNA(Gln) amidotransferase subunit A.